Consider the following 206-residue polypeptide: Guanylate kinase (206 aa).

The Guanylate kinase-like domain maps to 13–193 (PLLLVVSGPS…AVSEIMSIIS (181 aa)). 20–27 (GPSGVGKD) contacts ATP.

Belongs to the guanylate kinase family.

The protein localises to the cytoplasm. The enzyme catalyses GMP + ATP = GDP + ADP. Essential for recycling GMP and indirectly, cGMP. This chain is Guanylate kinase, found in Dehalococcoides mccartyi (strain ATCC BAA-2266 / KCTC 15142 / 195) (Dehalococcoides ethenogenes (strain 195)).